A 200-amino-acid chain; its full sequence is NADH-quinone oxidoreductase subunit B (200 aa).

Residues C78, C79, C144, and C174 each contribute to the [4Fe-4S] cluster site.

Belongs to the complex I 20 kDa subunit family. NDH-1 is composed of 14 different subunits. Subunits NuoB, C, D, E, F, and G constitute the peripheral sector of the complex. [4Fe-4S] cluster serves as cofactor.

Its subcellular location is the cell membrane. The catalysed reaction is a quinone + NADH + 5 H(+)(in) = a quinol + NAD(+) + 4 H(+)(out). Functionally, NDH-1 shuttles electrons from NADH, via FMN and iron-sulfur (Fe-S) centers, to quinones in the respiratory chain. The immediate electron acceptor for the enzyme in this species is believed to be ubiquinone. Couples the redox reaction to proton translocation (for every two electrons transferred, four hydrogen ions are translocated across the cytoplasmic membrane), and thus conserves the redox energy in a proton gradient. The polypeptide is NADH-quinone oxidoreductase subunit B (Dehalococcoides mccartyi (strain ATCC BAA-2100 / JCM 16839 / KCTC 5957 / BAV1)).